The sequence spans 89 residues: Small ribosomal subunit protein uS15 (89 aa).

Belongs to the universal ribosomal protein uS15 family. As to quaternary structure, part of the 30S ribosomal subunit. Forms a bridge to the 50S subunit in the 70S ribosome, contacting the 23S rRNA.

One of the primary rRNA binding proteins, it binds directly to 16S rRNA where it helps nucleate assembly of the platform of the 30S subunit by binding and bridging several RNA helices of the 16S rRNA. In terms of biological role, forms an intersubunit bridge (bridge B4) with the 23S rRNA of the 50S subunit in the ribosome. This chain is Small ribosomal subunit protein uS15, found in Porphyromonas gingivalis (strain ATCC 33277 / DSM 20709 / CIP 103683 / JCM 12257 / NCTC 11834 / 2561).